A 128-amino-acid polypeptide reads, in one-letter code: Large ribosomal subunit protein bL20 (128 aa).

It belongs to the bacterial ribosomal protein bL20 family.

Binds directly to 23S ribosomal RNA and is necessary for the in vitro assembly process of the 50S ribosomal subunit. It is not involved in the protein synthesizing functions of that subunit. This is Large ribosomal subunit protein bL20 from Micrococcus luteus (strain ATCC 4698 / DSM 20030 / JCM 1464 / CCM 169 / CCUG 5858 / IAM 1056 / NBRC 3333 / NCIMB 9278 / NCTC 2665 / VKM Ac-2230) (Micrococcus lysodeikticus).